Consider the following 146-residue polypeptide: Lipoprotein signal peptidase (146 aa).

3 helical membrane-spanning segments follow: residues 10–30 (GLFVLVFAIDQAIKALILGGF), 54–74 (FLEGWLKYIQLGMLGGILLFL), and 80–100 (FFVAHYLPLSILLAAGFSNIL). Catalysis depends on residues Asp-110 and Asp-127. A helical membrane pass occupies residues 118 to 138 (FEFAIFNFADVMIDVAVALFL).

This sequence belongs to the peptidase A8 family.

The protein localises to the cell inner membrane. It carries out the reaction Release of signal peptides from bacterial membrane prolipoproteins. Hydrolyzes -Xaa-Yaa-Zaa-|-(S,diacylglyceryl)Cys-, in which Xaa is hydrophobic (preferably Leu), and Yaa (Ala or Ser) and Zaa (Gly or Ala) have small, neutral side chains.. Its pathway is protein modification; lipoprotein biosynthesis (signal peptide cleavage). This protein specifically catalyzes the removal of signal peptides from prolipoproteins. This chain is Lipoprotein signal peptidase, found in Wolinella succinogenes (strain ATCC 29543 / DSM 1740 / CCUG 13145 / JCM 31913 / LMG 7466 / NCTC 11488 / FDC 602W) (Vibrio succinogenes).